Reading from the N-terminus, the 395-residue chain is S-adenosylmethionine synthase (395 aa).

ATP is bound at residue histidine 16. Aspartate 18 provides a ligand contact to Mg(2+). Glutamate 44 provides a ligand contact to K(+). The L-methionine site is built by glutamate 57 and glutamine 100. Residues 100-110 (QSPDIAQGVDR) are flexible loop. ATP contacts are provided by residues 167–169 (DAK), 233–234 (RF), aspartate 242, 248–249 (RK), alanine 265, and lysine 269. Aspartate 242 contributes to the L-methionine binding site. Lysine 273 provides a ligand contact to L-methionine.

It belongs to the AdoMet synthase family. In terms of assembly, homotetramer; dimer of dimers. Requires Mg(2+) as cofactor. The cofactor is K(+).

The protein localises to the cytoplasm. The catalysed reaction is L-methionine + ATP + H2O = S-adenosyl-L-methionine + phosphate + diphosphate. The protein operates within amino-acid biosynthesis; S-adenosyl-L-methionine biosynthesis; S-adenosyl-L-methionine from L-methionine: step 1/1. Catalyzes the formation of S-adenosylmethionine (AdoMet) from methionine and ATP. The overall synthetic reaction is composed of two sequential steps, AdoMet formation and the subsequent tripolyphosphate hydrolysis which occurs prior to release of AdoMet from the enzyme. This chain is S-adenosylmethionine synthase, found in Burkholderia lata (strain ATCC 17760 / DSM 23089 / LMG 22485 / NCIMB 9086 / R18194 / 383).